We begin with the raw amino-acid sequence, 509 residues long: Lysine--tRNA ligase (509 aa).

Residues Glu417 and Glu424 each coordinate Mg(2+).

Belongs to the class-II aminoacyl-tRNA synthetase family. In terms of assembly, homodimer. The cofactor is Mg(2+).

The protein resides in the cytoplasm. The catalysed reaction is tRNA(Lys) + L-lysine + ATP = L-lysyl-tRNA(Lys) + AMP + diphosphate. The polypeptide is Lysine--tRNA ligase (Blochmanniella pennsylvanica (strain BPEN)).